The primary structure comprises 380 residues: Tryptophan 2,3-dioxygenase (380 aa).

Substrate-binding positions include 57–61 (FIITH) and R128. H313 serves as a coordination point for heme. Substrate is bound at residue T328.

It belongs to the tryptophan 2,3-dioxygenase family. Homotetramer. Dimer of dimers. Heme serves as cofactor.

The enzyme catalyses L-tryptophan + O2 = N-formyl-L-kynurenine. It participates in amino-acid degradation; L-tryptophan degradation via kynurenine pathway; L-kynurenine from L-tryptophan: step 1/2. Its pathway is pigment biosynthesis; ommochrome biosynthesis. Functionally, heme-dependent dioxygenase that catalyzes the oxidative cleavage of the L-tryptophan (L-Trp) pyrrole ring and converts L-tryptophan to N-formyl-L-kynurenine. Catalyzes the oxidative cleavage of the indole moiety. This is Tryptophan 2,3-dioxygenase from Drosophila mojavensis (Fruit fly).